Here is a 330-residue protein sequence, read N- to C-terminus: Virulence plasmid integrase pGP8-D (330 aa).

Residues 39–124 (FSLFEVIMHW…SYISLTRFLN (86 aa)) form the Core-binding (CB) domain. In terms of domain architecture, Tyr recombinase spans 152-327 (VKTNAMNRLQ…SREDNASKKM (176 aa)). Residues Arg189, Lys214, His279, Arg282, and His305 contribute to the active site. Residue Tyr314 is the O-(3'-phospho-DNA)-tyrosine intermediate of the active site.

The protein belongs to the 'phage' integrase family.

The polypeptide is Virulence plasmid integrase pGP8-D (Chlamydia muridarum (strain MoPn / Nigg)).